A 293-amino-acid chain; its full sequence is MALSLIFLALLVLCPSSGHSQRSPSPGYYPSSRVPTSPFDREFRTLWGSQHQRREQDVVTLWLDKSTGSGFKSLRPYRSGYFGASIKLQPGFTAGVDTSLYLSNNQEHPGDHDEVDIEFLGTTPGKPYSLQTNVFVRGSGDRNVIGREMKFTLWFDPTQDFHHYAILWNPNQIVFFVDDVPIRTYNRKNEAIFPTRPMWVYGSIWDASDWATENGRIKADYRYQPFVAKYKNFKLAGCTADSSSSCRPPSPAPMRNRGLSRQQMAALTWAQRNFLVYNYCHDPKRDHTQTPEC.

The signal sequence occupies residues 1-20; the sequence is MALSLIFLALLVLCPSSGHS. A GH16 domain is found at 29-230; that stretch reads YPSSRVPTSP…YRYQPFVAKY (202 aa). Glutamate 114 functions as the Nucleophile in the catalytic mechanism. Glutamate 118 functions as the Proton donor in the catalytic mechanism. Xyloglucan-binding positions include glutamate 118, 131 to 133, 141 to 148, and 209 to 210; these read QTN, DRNVIGRE, and DW. Cystine bridges form between cysteine 238–cysteine 246 and cysteine 280–cysteine 293. Residue arginine 285 participates in xyloglucan binding.

The protein belongs to the glycosyl hydrolase 16 family. XTH group 3 subfamily. Interacts with XTH17. The formation of an XTH17-XTH31 dimer may be required for XET activity. In terms of processing, contains at least one intrachain disulfide bond essential for its enzymatic activity. In terms of tissue distribution, predominantly expressed in root. Weakly expressed in influorescence stems. Expressed in root tips and elongation zones, stems, young leaves, flowers and siliques. Expressed in root, hypocotyl, and etiolated whole seedlings.

Its subcellular location is the secreted. It localises to the cell wall. The protein localises to the extracellular space. The protein resides in the apoplast. It is found in the cell membrane. It carries out the reaction breaks a beta-(1-&gt;4) bond in the backbone of a xyloglucan and transfers the xyloglucanyl segment on to O-4 of the non-reducing terminal glucose residue of an acceptor, which can be a xyloglucan or an oligosaccharide of xyloglucan.. The catalysed reaction is xyloglucan + H2O = xyloglucan oligosaccharides.. In terms of biological role, catalyzes xyloglucan endohydrolysis (XEH) and/or endotransglycosylation (XET). Cleaves and religates xyloglucan polymers, an essential constituent of the primary cell wall, and thereby participates in cell wall construction of growing tissues. Involved in the accumulation of hemicelluloses. Has a high XEH activity and only a slight XET activity in vitro, but the main in planta activity seems to be XET, thus controlling aluminum sensitivity. Acceptor preferences are XXXGol = XXFGol &gt; XXLGol &gt; XLLGol = XLFGol. The protein is Xyloglucan endotransglucosylase/hydrolase protein 31 of Arabidopsis thaliana (Mouse-ear cress).